Here is a 629-residue protein sequence, read N- to C-terminus: Phosphatidylinositol-3,5-bisphosphate 3-phosphatase MTMR8 (629 aa).

The region spanning 126–500 is the Myotubularin phosphatase domain; it reads GWKLIDLKVD…FSFQFWCGMY (375 aa). Asn250, Asn275, and Ile276 together coordinate a 1,2-diacyl-sn-glycero-3-phospho-(1D-myo-inositol-3,5-bisphosphate). Residues Asn250, Asn275, and Ile276 each contribute to the a 1,2-diacyl-sn-glycero-3-phospho-(1D-myo-inositol-3-phosphate) site. Residue Cys338 is the Phosphocysteine intermediate of the active site. 8 residues coordinate a 1,2-diacyl-sn-glycero-3-phospho-(1D-myo-inositol-3,5-bisphosphate): Ser339, Asp340, Gly341, Trp342, Asp343, Arg344, Lys380, and Arg384. A 1,2-diacyl-sn-glycero-3-phospho-(1D-myo-inositol-3-phosphate) contacts are provided by Ser339, Asp340, Gly341, Trp342, Asp343, and Arg344. Phosphate is bound by residues Ser339 and Asp340. Phosphate contacts are provided by Trp342, Asp343, and Arg344. Arg384 lines the a 1,2-diacyl-sn-glycero-3-phospho-(1D-myo-inositol-3-phosphate) pocket. Residues 517-543 are a coiled coil; that stretch reads LLSCMNQKIKLEDNASELENKLPFLDG.

It belongs to the protein-tyrosine phosphatase family. Non-receptor class myotubularin subfamily. In terms of assembly, homodimer.

It is found in the nucleus envelope. The enzyme catalyses a 1,2-diacyl-sn-glycero-3-phospho-(1D-myo-inositol-3,5-bisphosphate) + H2O = a 1,2-diacyl-sn-glycero-3-phospho-(1D-myo-inositol-5-phosphate) + phosphate. It catalyses the reaction a 1,2-diacyl-sn-glycero-3-phospho-(1D-myo-inositol-3-phosphate) + H2O = a 1,2-diacyl-sn-glycero-3-phospho-(1D-myo-inositol) + phosphate. It carries out the reaction 1,2-dioctanoyl-sn-glycero-3-phospho-(1D-myo-inositol-3,5-bisphosphate) + H2O = 1,2-dioctanoyl-sn-glycero-3-phospho-(1D-myo-inositol-5-phosphate) + phosphate. Lipid phosphatase that specifically dephosphorylates the D-3 position of phosphatidylinositol 3-phosphate and phosphatidylinositol 3,5-bisphosphate, generating phosphatidylinositol and phosphatidylinositol 5-phosphate. The chain is Phosphatidylinositol-3,5-bisphosphate 3-phosphatase MTMR8 from Gallus gallus (Chicken).